Reading from the N-terminus, the 344-residue chain is Uroporphyrinogen decarboxylase (344 aa).

Substrate is bound by residues 26–30, phenylalanine 45, aspartate 75, tyrosine 151, serine 206, and histidine 320; that span reads RQAGR.

Belongs to the uroporphyrinogen decarboxylase family. Homodimer.

The protein localises to the cytoplasm. It catalyses the reaction uroporphyrinogen III + 4 H(+) = coproporphyrinogen III + 4 CO2. The protein operates within porphyrin-containing compound metabolism; protoporphyrin-IX biosynthesis; coproporphyrinogen-III from 5-aminolevulinate: step 4/4. Catalyzes the decarboxylation of four acetate groups of uroporphyrinogen-III to yield coproporphyrinogen-III. This is Uroporphyrinogen decarboxylase from Staphylococcus saprophyticus subsp. saprophyticus (strain ATCC 15305 / DSM 20229 / NCIMB 8711 / NCTC 7292 / S-41).